The chain runs to 475 residues: Ataxin-10 (475 aa).

Position 10 is an omega-N-methylarginine (R10). Residues S12 and S77 each carry the phosphoserine modification. A Phosphothreonine modification is found at T82. S430 is subject to Phosphoserine.

It belongs to the ataxin-10 family. As to quaternary structure, homooligomer. Interacts with GNB2. Interacts with IQCB1. Interacts with OGT. Polyubiquitinated. In terms of processing, phosphorylation at Ser-12 by AURKB promotes the association of ATXN10 with PLK1. Phosphorylation at Ser-77 and Thr-82 by PLK1 may play a role in the regulation of cytokinesis and may stimulate the proteasome-mediated degradation of ATXN10.

Its subcellular location is the cytoplasm. It localises to the perinuclear region. The protein resides in the cytoskeleton. The protein localises to the cilium basal body. It is found in the microtubule organizing center. Its subcellular location is the centrosome. It localises to the centriole. The protein resides in the midbody. May play a role in the regulation of cytokinesis. May play a role in signaling by stimulating protein glycosylation. Induces neuritogenesis by activating the Ras-MAP kinase pathway and is necessary for the survival of cerebellar neurons. Does not appear to play a major role in ciliogenesis. This is Ataxin-10 (ATXN10) from Bos taurus (Bovine).